A 467-amino-acid chain; its full sequence is Dimethylamine methyltransferase MtbB1 (467 aa).

Position 356 (O356) is a non-standard amino acid, pyrrolysine.

This sequence belongs to the dimethylamine methyltransferase family.

The enzyme catalyses Co(I)-[dimethylamine-specific corrinoid protein] + dimethylamine + H(+) = methyl-Co(III)-[dimethylamine-specific corrinoid protein] + methylamine. The protein operates within one-carbon metabolism; methanogenesis from dimethylamine. In terms of biological role, catalyzes the transfer of a methyl group from dimethylamine to the corrinoid cofactor of MtbC. The polypeptide is Dimethylamine methyltransferase MtbB1 (mtbB1) (Methanosarcina acetivorans (strain ATCC 35395 / DSM 2834 / JCM 12185 / C2A)).